The primary structure comprises 269 residues: Ribosomal RNA small subunit methyltransferase J (269 aa).

S-adenosyl-L-methionine-binding positions include 125–126 (ER) and Asp179.

It belongs to the methyltransferase superfamily. RsmJ family.

It localises to the cytoplasm. The catalysed reaction is guanosine(1516) in 16S rRNA + S-adenosyl-L-methionine = N(2)-methylguanosine(1516) in 16S rRNA + S-adenosyl-L-homocysteine + H(+). Its function is as follows. Specifically methylates the guanosine in position 1516 of 16S rRNA. The protein is Ribosomal RNA small subunit methyltransferase J of Pseudomonas syringae pv. syringae (strain B728a).